The sequence spans 364 residues: Nucleoside ABC transporter permease protein NupB (364 aa).

8 helical membrane passes run 9–29, 77–99, 105–125, 138–158, 195–215, 244–264, 284–304, and 326–346; these read LVPLIAIVFGFLLGAIIMLAF, FNIGMSGQALAGWISSMWFALSF, LLMIPLVVIIGMVFGAFMGFI, VITTIMLNYIMLFFSTFMIHS, TLNIGLIIAIIALVIMAIIFT, LILSMVVAGALAGLGGVVYGF, MAVALLGGNSPIGILFAALLF, and VVTAAIIFFIAVKFIIEVMLP.

The protein belongs to the binding-protein-dependent transport system permease family. The complex is composed of two ATP-binding proteins (NupA), two transmembrane proteins (NupB and NupC) and a solute-binding protein (BmpA).

It is found in the cell membrane. Part of an ABC transporter complex involved in the uptake of all common nucleosides. Responsible for the translocation of the substrate across the membrane. This Lactococcus lactis subsp. cremoris (strain MG1363) protein is Nucleoside ABC transporter permease protein NupB.